The chain runs to 715 residues: Fatty acid oxidation complex subunit alpha (715 aa).

The tract at residues 8-197 (NSQPSAFSLT…NLGLVEEAVP (190 aa)) is enoyl-CoA hydratase. Positions 313–715 (ATIKKVGVLG…MANEEQSFYS (403 aa)) are 3-hydroxyacyl-CoA dehydrogenase.

It in the N-terminal section; belongs to the enoyl-CoA hydratase/isomerase family. In the central section; belongs to the 3-hydroxyacyl-CoA dehydrogenase family. Heterotetramer of two alpha chains (FadJ) and two beta chains (FadI).

Its subcellular location is the cytoplasm. It carries out the reaction a (3S)-3-hydroxyacyl-CoA = a (2E)-enoyl-CoA + H2O. The enzyme catalyses a 4-saturated-(3S)-3-hydroxyacyl-CoA = a (3E)-enoyl-CoA + H2O. It catalyses the reaction a (3S)-3-hydroxyacyl-CoA + NAD(+) = a 3-oxoacyl-CoA + NADH + H(+). The catalysed reaction is (3S)-3-hydroxybutanoyl-CoA = (3R)-3-hydroxybutanoyl-CoA. It functions in the pathway lipid metabolism; fatty acid beta-oxidation. Catalyzes the formation of a hydroxyacyl-CoA by addition of water on enoyl-CoA. Also exhibits 3-hydroxyacyl-CoA epimerase and 3-hydroxyacyl-CoA dehydrogenase activities. The protein is Fatty acid oxidation complex subunit alpha of Photobacterium profundum (strain SS9).